The sequence spans 281 residues: NADPH-dependent 7-cyano-7-deazaguanine reductase (281 aa).

Residue 87–89 (IES) participates in substrate binding. 89–90 (SK) lines the NADPH pocket. Residue Cys188 is the Thioimide intermediate of the active site. The active-site Proton donor is the Asp195. Substrate is bound at residue 227–228 (HE). 256-257 (RG) contacts NADPH. The segment at 261–281 (INPYRSTEQAKPDHNHRMARQ) is disordered. Residues 268-281 (EQAKPDHNHRMARQ) show a composition bias toward basic and acidic residues.

Belongs to the GTP cyclohydrolase I family. QueF type 2 subfamily. As to quaternary structure, homodimer.

The protein localises to the cytoplasm. It catalyses the reaction 7-aminomethyl-7-carbaguanine + 2 NADP(+) = 7-cyano-7-deazaguanine + 2 NADPH + 3 H(+). The protein operates within tRNA modification; tRNA-queuosine biosynthesis. Functionally, catalyzes the NADPH-dependent reduction of 7-cyano-7-deazaguanine (preQ0) to 7-aminomethyl-7-deazaguanine (preQ1). This is NADPH-dependent 7-cyano-7-deazaguanine reductase from Vibrio vulnificus (strain CMCP6).